Reading from the N-terminus, the 542-residue chain is CTP synthase (542 aa).

The segment at 1–265 (MTKFVFVTGG…DEIVCHKLNL (265 aa)) is amidoligase domain. S13 is a binding site for CTP. S13 lines the UTP pocket. ATP is bound by residues 14 to 19 (SLGKGI) and D71. Mg(2+) contacts are provided by D71 and E139. CTP-binding positions include 146 to 148 (DIE), 186 to 191 (KTKPTQ), and K222. UTP contacts are provided by residues 186–191 (KTKPTQ) and K222. Positions 290–542 (NVAFVGKYVD…IAAALANRKA (253 aa)) constitute a Glutamine amidotransferase type-1 domain. Residue G351 coordinates L-glutamine. Residue C378 is the Nucleophile; for glutamine hydrolysis of the active site. Residues 379–382 (LGMQ), E402, and R468 each bind L-glutamine. Active-site residues include H515 and E517.

It belongs to the CTP synthase family. As to quaternary structure, homotetramer.

The enzyme catalyses UTP + L-glutamine + ATP + H2O = CTP + L-glutamate + ADP + phosphate + 2 H(+). The catalysed reaction is L-glutamine + H2O = L-glutamate + NH4(+). It carries out the reaction UTP + NH4(+) + ATP = CTP + ADP + phosphate + 2 H(+). It participates in pyrimidine metabolism; CTP biosynthesis via de novo pathway; CTP from UDP: step 2/2. Its activity is regulated as follows. Allosterically activated by GTP, when glutamine is the substrate; GTP has no effect on the reaction when ammonia is the substrate. The allosteric effector GTP functions by stabilizing the protein conformation that binds the tetrahedral intermediate(s) formed during glutamine hydrolysis. Inhibited by the product CTP, via allosteric rather than competitive inhibition. Functionally, catalyzes the ATP-dependent amination of UTP to CTP with either L-glutamine or ammonia as the source of nitrogen. Regulates intracellular CTP levels through interactions with the four ribonucleotide triphosphates. The polypeptide is CTP synthase (Methylobacillus flagellatus (strain ATCC 51484 / DSM 6875 / VKM B-1610 / KT)).